The chain runs to 147 residues: MGFTEKQESLVNSSWESFKQNLSGYSVLFYTIILEKAPAAKGMFSFLKDTTGVQDSPQLQAHAAKVFEMVRDSAVQLRATGEVILGDATLGAIHIQKGVVDPHFVVVKEALLKTIKEAAGGNWSEELSTAWEVAYDGLAASIKKSMS.

Positions 2–147 (GFTEKQESLV…LAASIKKSMS (146 aa)) constitute a Globin domain. 2 positions are modified to nitrated tyrosine: tyrosine 25 and tyrosine 30. Serine 45 lines the heme b pocket. Residue serine 45 is modified to Phosphoserine. Histidine 62 serves as a coordination point for O2. Positions 65, 94, and 97 each coordinate heme b. Position 135 is a nitrated tyrosine (tyrosine 135).

It belongs to the plant globin family. As to quaternary structure, monomer. Interacts with CAS31 in the cytoplasm; this interaction leads to its protection from denaturation under thermal and drought stresses. Nitrated in effective nodules and particularly in hypoxic conditions; this mechanism may play a protective role in the symbiosis by buffering toxic peroxynitrite NO(2)(-). Nitration level decrease during nodule senescence. Post-translationally, phosphorylation at Ser-45 disrupts the molecular environment of its porphyrin ring oxygen binding pocket, thus leading to a reduced oxygen consumption and to the delivery of oxygen O(2) to symbiosomes. As to expression, root nodules.

It is found in the cytoplasm. It localises to the nucleus. Its function is as follows. Leghemoglobin that reversibly binds oxygen O(2) through a pentacoordinated heme iron. In root nodules, facilitates the diffusion of oxygen to the bacteroids while preventing the bacterial nitrogenase from being inactivated by buffering dioxygen, nitric oxide and carbon monoxide, and promoting the formation of reactive oxygen species (ROS, e.g. H(2)O(2)). This role is essential for symbiotic nitrogen fixation (SNF). The polypeptide is Leghemoglobin 8 (Medicago truncatula (Barrel medic)).